The chain runs to 119 residues: Hydrogenase maturation factor HypA (119 aa).

H2 provides a ligand contact to Ni(2+). Zn(2+)-binding residues include C73, C76, C89, and C92.

It belongs to the HypA/HybF family.

Functionally, involved in the maturation of [NiFe] hydrogenases. Required for nickel insertion into the metal center of the hydrogenase. In Cupriavidus necator (strain ATCC 17699 / DSM 428 / KCTC 22496 / NCIMB 10442 / H16 / Stanier 337) (Ralstonia eutropha), this protein is Hydrogenase maturation factor HypA.